We begin with the raw amino-acid sequence, 709 residues long: Dibasic-processing endoprotease (709 aa).

The N-terminal stretch at 1–22 (MHPALLCGPILAIFLQFLVSSC) is a signal peptide. 2 consecutive propeptides follow at residues 23-82 (SPLE…IRKR) and 83-102 (GIDA…RYKR). The Lumenal segment spans residues 103-668 (DASESDELLN…QPVLEPSYRE (566 aa)). In terms of domain architecture, Peptidase S8 spans 128 to 440 (QWHIFNSNNP…FGKLDASKFV (313 aa)). An N-linked (GlcNAc...) asparagine glycan is attached at asparagine 155. Catalysis depends on charge relay system residues aspartate 162 and histidine 200. Disulfide bonds link cysteine 216/cysteine 363 and cysteine 308/cysteine 338. The active-site Charge relay system is serine 371. In terms of domain architecture, P/Homo B spans 449–588 (VNPQTWLIAP…QLALWGESEN (140 aa)). 3 N-linked (GlcNAc...) asparagine glycosylation sites follow: asparagine 463, asparagine 471, and asparagine 620. Residues 669 to 693 (IVAFITFFLLFAFIFVAVIWTWISA) form a helical membrane-spanning segment. Residues 694 to 709 (FWKAKAPPPLSQQEIA) lie on the Cytoplasmic side of the membrane.

It belongs to the peptidase S8 family. Furin subfamily. Ca(2+) is required as a cofactor. N-glycosylated.

Its subcellular location is the golgi apparatus. The protein resides in the trans-Golgi network membrane. Functionally, membrane-bound, subtilisin-like serine protease that processes the P-factor precursor and other precursor proteins. Essential for cell viability. Cleaves substrate on the C-terminal side of dibasic residues. This is Dibasic-processing endoprotease (krp1) from Schizosaccharomyces pombe (strain 972 / ATCC 24843) (Fission yeast).